The following is a 1486-amino-acid chain: Chromosome partition protein MukB (1486 aa).

Gly34 to Ser41 serves as a coordination point for ATP. Coiled coils occupy residues Leu326–Gln418, Leu444–Gln480, and Arg509–Val603. A flexible hinge region spans residues Pro666–Arg783. Coiled-coil stretches lie at residues Glu835–Glu923, Glu977–Ala1115, and Val1209–Ser1266.

Belongs to the SMC family. MukB subfamily. Homodimerization via its hinge domain. Binds to DNA via its C-terminal region. Interacts, and probably forms a ternary complex, with MukE and MukF via its C-terminal region. The complex formation is stimulated by calcium or magnesium. Interacts with tubulin-related protein FtsZ.

The protein localises to the cytoplasm. It localises to the nucleoid. Plays a central role in chromosome condensation, segregation and cell cycle progression. Functions as a homodimer, which is essential for chromosome partition. Involved in negative DNA supercoiling in vivo, and by this means organize and compact chromosomes. May achieve or facilitate chromosome segregation by condensation DNA from both sides of a centrally located replisome during cell division. The protein is Chromosome partition protein MukB of Escherichia coli O17:K52:H18 (strain UMN026 / ExPEC).